The primary structure comprises 402 residues: Envelope glycoprotein D (402 aa).

The N-terminal stretch at 1–30 (MSTFKLMMDGRLVFAMAIAILSVVLSCGTC) is a signal peptide. Residues 31-355 (EKAKRAVRGR…NSTFVGISVG (325 aa)) are Virion surface-facing. N-linked (GlcNAc...) asparagine; by host glycosylation is found at asparagine 53 and asparagine 61. 3 cysteine pairs are disulfide-bonded: cysteine 88-cysteine 209, cysteine 126-cysteine 223, and cysteine 138-cysteine 147. The disordered stretch occupies residues 281-315 (PDNHPGFDSVESEITQNKTDPKPGQADPKPNQPFK). Asparagine 297 and asparagine 346 each carry an N-linked (GlcNAc...) asparagine; by host glycan. The chain crosses the membrane as a helical span at residues 356 to 372 (LGIAGLVLVGVILYVCL). Residues 373–402 (RRKKELKKSAQNGLTRLRSTFKDVKYTQLP) are Intravirion-facing.

This sequence belongs to the herpesviridae glycoprotein D family.

It is found in the virion membrane. Envelope glycoprotein that binds to host cell entry receptors, promoting the virus entry into host cells. May trigger fusion with host membrane, by recruiting the fusion machinery composed of gB and gH/gL. The protein is Envelope glycoprotein D (gD) of Equus caballus (Horse).